The following is a 406-amino-acid chain: Tryptophan 2,3-dioxygenase (406 aa).

Residues 72–76 and Arg144 contribute to the substrate site; that span reads FIVTH. His328 is a heme binding site. Thr342 provides a ligand contact to substrate.

The protein belongs to the tryptophan 2,3-dioxygenase family. In terms of assembly, homotetramer. Dimer of dimers. Requires heme as cofactor.

The enzyme catalyses L-tryptophan + O2 = N-formyl-L-kynurenine. The protein operates within amino-acid degradation; L-tryptophan degradation via kynurenine pathway; L-kynurenine from L-tryptophan: step 1/2. Its function is as follows. Heme-dependent dioxygenase that catalyzes the oxidative cleavage of the L-tryptophan (L-Trp) pyrrole ring and converts L-tryptophan to N-formyl-L-kynurenine. Catalyzes the oxidative cleavage of the indole moiety. This Xenopus laevis (African clawed frog) protein is Tryptophan 2,3-dioxygenase.